Reading from the N-terminus, the 78-residue chain is Acyl carrier protein (78 aa).

Residues 4-78 (AQIKEKVYDI…QQAIDYIVKK (75 aa)) enclose the Carrier domain. S39 is modified (O-(pantetheine 4'-phosphoryl)serine).

This sequence belongs to the acyl carrier protein (ACP) family. 4'-phosphopantetheine is transferred from CoA to a specific serine of apo-ACP by AcpS. This modification is essential for activity because fatty acids are bound in thioester linkage to the sulfhydryl of the prosthetic group.

The protein resides in the cytoplasm. It functions in the pathway lipid metabolism; fatty acid biosynthesis. Functionally, carrier of the growing fatty acid chain in fatty acid biosynthesis. This chain is Acyl carrier protein, found in Chlorobium phaeobacteroides (strain DSM 266 / SMG 266 / 2430).